Reading from the N-terminus, the 175-residue chain is Glutamyl-tRNA(Gln) amidotransferase subunit C, mitochondrial (175 aa).

Belongs to the GatC family. Subunit of the heterotrimeric GatCAB amidotransferase (AdT) complex, composed of A, B and C subunits.

The protein resides in the mitochondrion. The catalysed reaction is L-glutamyl-tRNA(Gln) + L-glutamine + ATP + H2O = L-glutaminyl-tRNA(Gln) + L-glutamate + ADP + phosphate + H(+). Its function is as follows. Allows the formation of correctly charged Gln-tRNA(Gln) through the transamidation of misacylated Glu-tRNA(Gln) in the mitochondria. The reaction takes place in the presence of glutamine and ATP through an activated gamma-phospho-Glu-tRNA(Gln). The sequence is that of Glutamyl-tRNA(Gln) amidotransferase subunit C, mitochondrial from Caenorhabditis elegans.